We begin with the raw amino-acid sequence, 156 residues long: PopC secretion inhibitor (156 aa).

The disordered stretch occupies residues 1–89 (MNPGSAPWER…PVRSRAEVHQ (89 aa)). Residues 8–28 (WERRTRERMRAMSRKNGEWGD) are compositionally biased toward basic and acidic residues.

As to quaternary structure, interacts with PopC in non-starving cells.

The protein localises to the cytoplasm. With respect to regulation, in response to starvation, RelA is activated resulting in the accumulation of (p)ppGpp, which causes the degradation of PopD in an FtsH(D)-dependent manner, thereby releasing pre-formed PopC for secretion. Functionally, inhibitor of protease PopC. In non-starving cells, forms a cytoplasmic complex with PopC and inhibits PopC secretion and activity. This Myxococcus xanthus (strain DK1622) protein is PopC secretion inhibitor.